Reading from the N-terminus, the 672-residue chain is Putative sodium/calcium exchanger 7 (672 aa).

A signal peptide spans 1–23 (MAQPSILFSLTLIFLISIKSCDA). A run of 12 helical transmembrane segments spans residues 88-108 (VILI…VSSA), 130-150 (VAGV…GSIA), 164-184 (LGEL…TIIL), 196-216 (IRDL…FVFY), 221-241 (LWMP…VIGA), 451-471 (LTLL…QFFL), 479-499 (PGLW…IMVF), 522-542 (IAWI…LGVV), 551-571 (GLTI…VSVV), 581-601 (AAAI…PFTI), 620-640 (LILF…VQKF), and 649-669 (VLIS…TGVL).

Belongs to the Ca(2+):cation antiporter (CaCA) (TC 2.A.19) family.

The protein localises to the membrane. The chain is Putative sodium/calcium exchanger 7 (ncx-7) from Caenorhabditis elegans.